Here is a 477-residue protein sequence, read N- to C-terminus: tRNA(Ile)-lysidine synthase (477 aa).

An ATP-binding site is contributed by 36–41; it reads SGGADS.

Belongs to the tRNA(Ile)-lysidine synthase family.

The protein resides in the cytoplasm. The enzyme catalyses cytidine(34) in tRNA(Ile2) + L-lysine + ATP = lysidine(34) in tRNA(Ile2) + AMP + diphosphate + H(+). Ligates lysine onto the cytidine present at position 34 of the AUA codon-specific tRNA(Ile) that contains the anticodon CAU, in an ATP-dependent manner. Cytidine is converted to lysidine, thus changing the amino acid specificity of the tRNA from methionine to isoleucine. The sequence is that of tRNA(Ile)-lysidine synthase from Treponema pallidum (strain Nichols).